Here is a 599-residue protein sequence, read N- to C-terminus: Elongation factor 4 (599 aa).

The region spanning 2-184 (KNIRNFSIIA…RLVRDIPPPE (183 aa)) is the tr-type G domain. GTP contacts are provided by residues 14 to 19 (DHGKST) and 131 to 134 (NKID).

This sequence belongs to the TRAFAC class translation factor GTPase superfamily. Classic translation factor GTPase family. LepA subfamily.

The protein localises to the cell inner membrane. The enzyme catalyses GTP + H2O = GDP + phosphate + H(+). Functionally, required for accurate and efficient protein synthesis under certain stress conditions. May act as a fidelity factor of the translation reaction, by catalyzing a one-codon backward translocation of tRNAs on improperly translocated ribosomes. Back-translocation proceeds from a post-translocation (POST) complex to a pre-translocation (PRE) complex, thus giving elongation factor G a second chance to translocate the tRNAs correctly. Binds to ribosomes in a GTP-dependent manner. The chain is Elongation factor 4 from Cronobacter sakazakii (strain ATCC BAA-894) (Enterobacter sakazakii).